Reading from the N-terminus, the 334-residue chain is Isocitrate/homoisocitrate dehydrogenase (334 aa).

70–72 serves as a coordination point for NADH; sequence ATS. The (2R,3S)-homoisocitrate site is built by S72, R85, R88, R98, R118, Y125, K171, and N173. NADH is bound at residue N173. Mg(2+) is bound by residues D204, D228, and D232. Residues 261 to 265 and N273 each bind NADH; that span reads GSAPD.

This sequence belongs to the isocitrate and isopropylmalate dehydrogenases family. Homotetramer. Dimer of dimers. The homotetramer can transiently dissociate into homodimers. Mg(2+) is required as a cofactor.

The enzyme catalyses (2R,3S)-homoisocitrate + NAD(+) = 2-oxoadipate + CO2 + NADH. The catalysed reaction is D-threo-isocitrate + NAD(+) = 2-oxoglutarate + CO2 + NADH. It participates in amino-acid biosynthesis; L-lysine biosynthesis via AAA pathway; L-alpha-aminoadipate from 2-oxoglutarate: step 4/5. Functionally, catalyzes the NAD(+)-dependent oxidative decarboxylation of homoisocitrate to 2-oxoadipate (alpha-ketoadipate), a reaction involved in lysine biosynthesis through the alpha-aminoadipate pathway. In addition, has high activity with isocitrate, but is inactive with 3-isopropylmalate. This Thermus thermophilus (strain ATCC BAA-163 / DSM 7039 / HB27) protein is Isocitrate/homoisocitrate dehydrogenase (hicd).